The sequence spans 761 residues: BMP/retinoic acid-inducible neural-specific protein 1 (761 aa).

An N-terminal signal peptide occupies residues 1-22 (MNWRLVEFLYLLFIWDHILVQP). An MACPF domain is found at 68-251 (RYKIYREFAR…FVQSALSYIM (184 aa)). N-linked (GlcNAc...) asparagine glycans are attached at residues Asn-156, Asn-433, Asn-443, Asn-553, Asn-599, Asn-631, and Asn-677.

The protein belongs to the BRINP family.

The protein resides in the cytoplasm. Plays a role in neurogenesis and brain development. May suppress cell cycle progression in postmitotic neurons by inhibiting G1/S transition. The sequence is that of BMP/retinoic acid-inducible neural-specific protein 1 (BRINP1) from Gallus gallus (Chicken).